An 85-amino-acid polypeptide reads, in one-letter code: Large ribosomal subunit protein bL27 (85 aa).

Residues 1-21 (MAHKKGVGSTRNGRDSDGQRL) are disordered.

It belongs to the bacterial ribosomal protein bL27 family.

The protein is Large ribosomal subunit protein bL27 of Geotalea uraniireducens (strain Rf4) (Geobacter uraniireducens).